Consider the following 269-residue polypeptide: MSKVIKKRVETSPRPTASSDSLQTCAGVIEYAKSISKSNAKCIEYVTLNASQYANCSSISIKLTDSLSSQMTSTFIMLEGETKLYKNKSKQDRSDGYFLKIKVTAASPMLYQLLEAVYGNIKHKERIPNSLHSLLVETITEKTFKDESIFINKLNGAMVEYVSTGELSILRSIEGELESLSKRERQLAKAIITPVVFYRSGTETKITFALKKLIIDREVVANVIGLSGDSERVSMTENVEEDLARNLGLVDIDDEYDEDSDKEKPIFNV.

It belongs to the orthopoxvirus OPG079 family. Homoomultimer (Potential). Interacts with the small subunit of ribonucleotide reductase. Interacts with host FAM111A; this interaction protomtes OPG079 degradation through autophagy.

Its subcellular location is the host cytoplasm. Plays an essential role in viral DNA replication. Binds to ssDNA with high affinity and localizes to cytoplasmic factories where nascent viral genomes accumulate. May disrupt loops, hairpins and other secondary structures present on ssDNA to reduce and eliminate pausing of viral DNA polymerase at specific sites during elongation. The polypeptide is Protein OPG079 (OPG079) (Variola virus (isolate Human/India/Ind3/1967) (VARV)).